We begin with the raw amino-acid sequence, 186 residues long: MTDCSRCAGTNASGPNHWSERIRDIVDFPKPGIVFKDITPLLSDGPDFASALDEMAQPWRTTPLDAVLGIEALGFILGAALARELRTGFVPVRKPGKLPGRTLIREYALEYGTDRIEMHEGALPRGARVLIVDDVLATGGTLRAALGLAAQLELEIVGAAVLVELLALQGRQKWADDVPLLATLSF.

This sequence belongs to the purine/pyrimidine phosphoribosyltransferase family. In terms of assembly, homodimer.

The protein localises to the cytoplasm. It catalyses the reaction AMP + diphosphate = 5-phospho-alpha-D-ribose 1-diphosphate + adenine. It participates in purine metabolism; AMP biosynthesis via salvage pathway; AMP from adenine: step 1/1. In terms of biological role, catalyzes a salvage reaction resulting in the formation of AMP, that is energically less costly than de novo synthesis. This chain is Adenine phosphoribosyltransferase, found in Xanthomonas oryzae pv. oryzae (strain MAFF 311018).